A 799-amino-acid polypeptide reads, in one-letter code: Signal transducer and activator of transcription 5A (799 aa).

Tyr90 carries the post-translational modification Phosphotyrosine. Ser128 carries the phosphoserine modification. In terms of domain architecture, SH2 spans Trp589 to Val686. Residue Tyr682 is modified to Phosphotyrosine. The residue at position 699 (Tyr699) is a Phosphotyrosine; by JAK2. Positions Asp778–Ser799 are disordered. Ser785 bears the Phosphoserine mark.

It belongs to the transcription factor STAT family. As to quaternary structure, forms a homodimer or a heterodimer with a related family member. Binds NR3C1. Interacts with NCOA1 and SOCS7. Interacts with ERBB4. Interacts with EBF4. Interacts with CD69. ISGylated. Post-translationally, tyrosine phosphorylated in response to KITLG/SCF, IL2, IL3, IL7, IL15, CSF2/GMCSF, GH1, PRL, EPO and THPO. Activated KIT promotes phosphorylation on tyrosine residues and subsequent translocation to the nucleus. Tyrosine phosphorylated in response to constitutively activated FGFR1, FGFR2, FGFR3 and FGFR4. Tyrosine phosphorylation is required for DNA-binding activity and dimerization. Serine phosphorylation is also required for maximal transcriptional activity. Tyrosine phosphorylated in response to signaling via activated FLT3; wild-type FLT3 results in much weaker phosphorylation than constitutively activated mutant FLT3. Alternatively, can be phosphorylated by JAK2 at Tyr-699.

It is found in the cytoplasm. Its subcellular location is the nucleus. Carries out a dual function: signal transduction and activation of transcription. Mediates cellular responses to the cytokine KITLG/SCF and other growth factors. May mediate cellular responses to activated FGFR1, FGFR2, FGFR3 and FGFR4. Binds to the GAS element and activates PRL-induced transcription. Regulates the expression of milk proteins during lactation. The polypeptide is Signal transducer and activator of transcription 5A (STAT5A) (Sus scrofa (Pig)).